The following is a 332-amino-acid chain: Glycerol-3-phosphate dehydrogenase [NAD(P)+] (332 aa).

5 residues coordinate NADPH: Ser11, Trp12, Arg32, Arg33, and Lys106. Positions 106 and 136 each coordinate sn-glycerol 3-phosphate. Ala140 is a binding site for NADPH. Lys191, Asp244, Ser254, Arg255, and Asn256 together coordinate sn-glycerol 3-phosphate. Residue Lys191 is the Proton acceptor of the active site. Arg255 is a binding site for NADPH. The NADPH site is built by Val280 and Glu282.

Belongs to the NAD-dependent glycerol-3-phosphate dehydrogenase family.

It is found in the cytoplasm. The catalysed reaction is sn-glycerol 3-phosphate + NAD(+) = dihydroxyacetone phosphate + NADH + H(+). It carries out the reaction sn-glycerol 3-phosphate + NADP(+) = dihydroxyacetone phosphate + NADPH + H(+). Its pathway is membrane lipid metabolism; glycerophospholipid metabolism. In terms of biological role, catalyzes the reduction of the glycolytic intermediate dihydroxyacetone phosphate (DHAP) to sn-glycerol 3-phosphate (G3P), the key precursor for phospholipid synthesis. This Corynebacterium kroppenstedtii (strain DSM 44385 / JCM 11950 / CIP 105744 / CCUG 35717) protein is Glycerol-3-phosphate dehydrogenase [NAD(P)+].